The chain runs to 83 residues: MSSGGLLLLLGLLTLWEVLTPVSSKDRPEFCELPADPGPCNALSQAYYNAVQHKCLKFRYGGCKANPNTFKTIEECKRTCAGK.

The N-terminal stretch at 1–24 (MSSGGLLLLLGLLTLWEVLTPVSS) is a signal peptide. A BPTI/Kunitz inhibitor domain is found at 31–80 (CELPADPGPCNALSQAYYNAVQHKCLKFRYGGCKANPNTFKTIEECKRTC). Disulfide bonds link cysteine 31–cysteine 80, cysteine 40–cysteine 63, and cysteine 55–cysteine 76.

It localises to the secreted. Its function is as follows. Serine protease inhibitor. The sequence is that of Stephenin-3 from Hoplocephalus stephensii (Stephens's banded snake).